The sequence spans 145 residues: 3-dehydroquinate dehydratase (145 aa).

Tyr-22 (proton acceptor) is an active-site residue. Asn-71, His-77, and Asp-84 together coordinate substrate. Residue His-97 is the Proton donor of the active site. Residues 98 to 99 and Arg-108 each bind substrate; that span reads IS.

The protein belongs to the type-II 3-dehydroquinase family. Homododecamer.

It catalyses the reaction 3-dehydroquinate = 3-dehydroshikimate + H2O. It functions in the pathway metabolic intermediate biosynthesis; chorismate biosynthesis; chorismate from D-erythrose 4-phosphate and phosphoenolpyruvate: step 3/7. Its function is as follows. Catalyzes a trans-dehydration via an enolate intermediate. The chain is 3-dehydroquinate dehydratase from Exiguobacterium sp. (strain ATCC BAA-1283 / AT1b).